The sequence spans 54 residues: Ovomucoid (54 aa).

A Kazal-like domain is found at Val4–Cys54. 3 cysteine pairs are disulfide-bonded: Cys6/Cys36, Cys14/Cys33, and Cys22/Cys54. The N-linked (GlcNAc...) asparagine glycan is linked to Asn43.

Its subcellular location is the secreted. This Pavo muticus (Green peafowl) protein is Ovomucoid.